The chain runs to 414 residues: Lysosome-associated membrane glycoprotein 1 (414 aa).

The first 18 residues, 1 to 18 (MGGAARAVLLGFLQASSS), serve as a signal peptide directing secretion. Residues 19 to 181 (FDVRDSTGKV…SANKTECRED (163 aa)) are first lumenal domain. Residues 19–379 (FDVRDSTGKV…EECQLDENNM (361 aa)) are Lumenal-facing. An intrachain disulfide couples cysteine 29 to cysteine 67. Residues asparagine 33, asparagine 58, asparagine 71, asparagine 90, asparagine 108, asparagine 117, asparagine 154, asparagine 159, asparagine 168, and asparagine 174 are each glycosylated (N-linked (GlcNAc...) asparagine). The cysteines at positions 142 and 178 are disulfide-linked. Residues 182 to 224 (MVSTTTVAPTTPKHATSQVPTTSPAPTAAPSSPAVGKYNVTGA) are hinge. The disordered stretch occupies residues 186–213 (TTVAPTTPKHATSQVPTTSPAPTAAPSS). Low complexity predominate over residues 196 to 213 (ATSQVPTTSPAPTAAPSS). Residues asparagine 220, asparagine 225, asparagine 238, asparagine 259, asparagine 289, asparagine 301, and asparagine 319 are each glycosylated (N-linked (GlcNAc...) asparagine). A second lumenal domain region spans residues 225-379 (NGTCVLASMG…EECQLDENNM (155 aa)). A disulfide bridge connects residues cysteine 228 and cysteine 266. Cysteine 335 and cysteine 372 are oxidised to a cystine. The helical transmembrane segment at 380-403 (LIPIIVGAALAGLVLIVLIAYLIG) threads the bilayer. Over 404–414 (RKRSHAGYQTI) the chain is Cytoplasmic.

Belongs to the LAMP family.

Its subcellular location is the lysosome membrane. The protein localises to the endosome membrane. It is found in the late endosome membrane. The protein resides in the cell membrane. It localises to the cytolytic granule membrane. In terms of biological role, lysosomal membrane glycoprotein which plays an important role in lysosome biogenesis, lysosomal pH regulation, autophagy and cholesterol homeostasis. Its function is as follows. (Microbial infection) Plays an essential role in efficient replication and spread of Marek's disease virus, by facilitating viral cell-to-cell spread. The protein is Lysosome-associated membrane glycoprotein 1 (LAMP1) of Gallus gallus (Chicken).